Reading from the N-terminus, the 251-residue chain is Derlin-1 (251 aa).

Serine 2 bears the N-acetylserine mark. The Cytoplasmic segment spans residues 2-15 (SDIGDWFRSIPAIT). A helical transmembrane segment spans residues 16 to 31 (RYWFAATVAVPLVGKL). At 32 to 69 (GLISPAYLFLWPEAFLYRFQIWRPITATFYFPVGPGTG) the chain is on the lumenal side. A helical transmembrane segment spans residues 70-89 (FLYLVNLYFLYQYSTRLETG). Over 90 to 94 (AFDGR) the chain is Cytoplasmic. A helical transmembrane segment spans residues 95-115 (PADYLFMLLFNWICIVITGLA). Residues 116–122 (MDMQLLM) lie on the Lumenal side of the membrane. Residues 123–137 (IPLIMSVLYVWAQLN) form a helical membrane-spanning segment. Residues 138-154 (RDMIVSFWFGTRFKACY) lie on the Cytoplasmic side of the membrane. Residues 155–166 (LPWVILGFNYII) traverse the membrane as a helical segment. The Lumenal segment spans residues 167–170 (GGSV). A helical membrane pass occupies residues 171–189 (INELIGNLVGHLYFFLMFR). Residues 190–251 (YPMDLGGRNF…WGQGFRLGDQ (62 aa)) lie on the Cytoplasmic side of the membrane. At serine 201 the chain carries Phosphoserine. Threonine 202 carries the post-translational modification Phosphothreonine. Serine 226 is subject to Phosphoserine. The interval 229 to 251 (RAADQNGGGGRHNWGQGFRLGDQ) is disordered. The SHP-box motif lies at 241–248 (NWGQGFRL).

This sequence belongs to the derlin family. Homotetramer. The four subunits of the tetramer are arranged in a twofold symmetry. Forms heterooligomers with DERL2 and DERL3; binding to DERL3 is poorer than that between DERL2 and DERL3. Interacts (via SHP-box motif) with VCP. Interacts with AMFR, SELENOS, SEL1L, SELENOK and SYVN1, as well as with SEL1L-SYVN1 and VCP-SELENOS protein complexes; this interaction is weaker than that observed between DERL2 and these complexes. Interacts with NGLY1 and YOD1. Does not bind to EDEM1. Interacts with DNAJB9. Interacts with RNF103. Interacts with HM13. Interacts with XBP1 isoform 1 (via luminal/ectodomain domain); the interaction obviates the need for ectodomain shedding prior HM13/SPP-mediated XBP1 isoform 1 cleavage. Interacts with the signal recognition particle/SRP and the SRP receptor; in the process of endoplasmic reticulum stress-induced pre-emptive quality control. May interact with UBXN6. Interacts with ZFAND2B; probably through VCP. Interacts with CCDC47. Interacts with C18orf32. May interact with TRAM1. Forms a complex with SVIP and VCP/p97. As to quaternary structure, (Microbial infection) Interacts with the cytomegalovirus US11 protein. In terms of tissue distribution, ubiquitous.

The protein localises to the endoplasmic reticulum membrane. In terms of biological role, functional component of endoplasmic reticulum-associated degradation (ERAD) for misfolded lumenal proteins. Forms homotetramers which encircle a large channel traversing the endoplasmic reticulum (ER) membrane. This allows the retrotranslocation of misfolded proteins from the ER into the cytosol where they are ubiquitinated and degraded by the proteasome. The channel has a lateral gate within the membrane which provides direct access to membrane proteins with no need to reenter the ER lumen first. May mediate the interaction between VCP and the misfolded protein. Also involved in endoplasmic reticulum stress-induced pre-emptive quality control, a mechanism that selectively attenuates the translocation of newly synthesized proteins into the endoplasmic reticulum and reroutes them to the cytosol for proteasomal degradation. By controlling the steady-state expression of the IGF1R receptor, indirectly regulates the insulin-like growth factor receptor signaling pathway. Functionally, (Microbial infection) In case of infection by cytomegaloviruses, it plays a central role in the export from the ER and subsequent degradation of MHC class I heavy chains via its interaction with US11 viral protein, which recognizes and associates with MHC class I heavy chains. Also participates in the degradation process of misfolded cytomegalovirus US2 protein. The polypeptide is Derlin-1 (Homo sapiens (Human)).